Reading from the N-terminus, the 123-residue chain is MEFSVESLETPALTKAHLAELLFEQIGLNKRESKEMIDAFFELISDRLVEGKDVKISGFGNFQIRTKAPRPGRNPRTGEAIPIESRRVVTFHASHKLKEQIQGSALLGLKTANIFAEDNGPVT.

Belongs to the bacterial histone-like protein family. As to quaternary structure, heterodimer of an alpha and a beta chain.

In terms of biological role, this protein is one of the two subunits of integration host factor, a specific DNA-binding protein that functions in genetic recombination as well as in transcriptional and translational control. This Polaromonas naphthalenivorans (strain CJ2) protein is Integration host factor subunit alpha.